A 531-amino-acid polypeptide reads, in one-letter code: Phosphomethylpyrimidine synthase (531 aa).

Substrate-binding positions include asparagine 167, methionine 196, tyrosine 225, histidine 261, 281–283, 322–325, and glutamate 361; these read SRG and DALR. Histidine 365 contacts Zn(2+). Tyrosine 388 is a substrate binding site. Residue histidine 429 participates in Zn(2+) binding. [4Fe-4S] cluster-binding residues include cysteine 511, cysteine 514, and cysteine 519.

It belongs to the ThiC family. [4Fe-4S] cluster serves as cofactor.

The enzyme catalyses 5-amino-1-(5-phospho-beta-D-ribosyl)imidazole + S-adenosyl-L-methionine = 4-amino-2-methyl-5-(phosphooxymethyl)pyrimidine + CO + 5'-deoxyadenosine + formate + L-methionine + 3 H(+). It functions in the pathway cofactor biosynthesis; thiamine diphosphate biosynthesis. In terms of biological role, catalyzes the synthesis of the hydroxymethylpyrimidine phosphate (HMP-P) moiety of thiamine from aminoimidazole ribotide (AIR) in a radical S-adenosyl-L-methionine (SAM)-dependent reaction. The sequence is that of Phosphomethylpyrimidine synthase from Chlorobium chlorochromatii (strain CaD3).